We begin with the raw amino-acid sequence, 513 residues long: GMP synthase [glutamine-hydrolyzing] (513 aa).

Residues 3–200 form the Glutamine amidotransferase type-1 domain; it reads SVLVLDFGSQ…LLNIAGITPD (198 aa). The Nucleophile role is filled by Cys80. Residues His174 and Glu176 contribute to the active site. Positions 201–388 constitute a GMPS ATP-PPase domain; that stretch reads WSSKSFIDHQ…LGIAEDILMR (188 aa). Residue 228-234 participates in ATP binding; it reads SGGVDST.

In terms of assembly, homodimer.

The catalysed reaction is XMP + L-glutamine + ATP + H2O = GMP + L-glutamate + AMP + diphosphate + 2 H(+). It participates in purine metabolism; GMP biosynthesis; GMP from XMP (L-Gln route): step 1/1. Its function is as follows. Catalyzes the synthesis of GMP from XMP. In Chlorobium phaeovibrioides (strain DSM 265 / 1930) (Prosthecochloris vibrioformis (strain DSM 265)), this protein is GMP synthase [glutamine-hydrolyzing].